The primary structure comprises 236 residues: Uridylate kinase (236 aa).

ATP is bound at residue 12-15 (KISG). Residues 20–25 (GTNGYG) are involved in allosteric activation by GTP. Residue glycine 54 participates in UMP binding. Residues glycine 55 and arginine 59 each coordinate ATP. UMP is bound by residues aspartate 72 and 133-140 (TGNPYFST). Residues tyrosine 166 and aspartate 169 each contribute to the ATP site.

The protein belongs to the UMP kinase family. As to quaternary structure, homohexamer.

It is found in the cytoplasm. The catalysed reaction is UMP + ATP = UDP + ADP. Its pathway is pyrimidine metabolism; CTP biosynthesis via de novo pathway; UDP from UMP (UMPK route): step 1/1. Allosterically activated by GTP. Inhibited by UTP. Its function is as follows. Catalyzes the reversible phosphorylation of UMP to UDP. The sequence is that of Uridylate kinase from Clostridium acetobutylicum (strain ATCC 824 / DSM 792 / JCM 1419 / IAM 19013 / LMG 5710 / NBRC 13948 / NRRL B-527 / VKM B-1787 / 2291 / W).